The sequence spans 299 residues: tRNA-cytidine(32) 2-sulfurtransferase (299 aa).

A PP-loop motif motif is present at residues 49–54 (SGGKDS). Cys124, Cys127, and Cys215 together coordinate [4Fe-4S] cluster.

This sequence belongs to the TtcA family. Homodimer. Requires Mg(2+) as cofactor. The cofactor is [4Fe-4S] cluster.

The protein resides in the cytoplasm. It catalyses the reaction cytidine(32) in tRNA + S-sulfanyl-L-cysteinyl-[cysteine desulfurase] + AH2 + ATP = 2-thiocytidine(32) in tRNA + L-cysteinyl-[cysteine desulfurase] + A + AMP + diphosphate + H(+). It participates in tRNA modification. In terms of biological role, catalyzes the ATP-dependent 2-thiolation of cytidine in position 32 of tRNA, to form 2-thiocytidine (s(2)C32). The sulfur atoms are provided by the cysteine/cysteine desulfurase (IscS) system. In Deinococcus radiodurans (strain ATCC 13939 / DSM 20539 / JCM 16871 / CCUG 27074 / LMG 4051 / NBRC 15346 / NCIMB 9279 / VKM B-1422 / R1), this protein is tRNA-cytidine(32) 2-sulfurtransferase.